Consider the following 296-residue polypeptide: Enoyl-CoA hydratase ACTT3 (296 aa).

The short motif at 294-296 is the Peroxisomal targeting signal type 1 element; the sequence is PKL.

It belongs to the enoyl-CoA hydratase/isomerase family.

The protein resides in the peroxisome. It catalyses the reaction a (3S)-3-hydroxyacyl-CoA = a (2E)-enoyl-CoA + H2O. The enzyme catalyses a 4-saturated-(3S)-3-hydroxyacyl-CoA = a (3E)-enoyl-CoA + H2O. Its pathway is mycotoxin biosynthesis. Its function is as follows. Enoyl-CoA hydratase; part of the gene clusters that mediate the biosynthesis of the host-selective toxins (HSTs) ACT-toxins responsible for brown spot of tangerine disease by the tangerine pathotype which affects tangerines and mandarins. ACT-toxins consist of three moieties, 9,10-epoxy-8-hydroxy-9-methyl-decatrienoic acid (EDA), valine and a polyketide. ACT-toxin I is toxic to both citrus and pear; toxin II the 5''-deoxy derivative of ACT-toxin I, is highly toxic to pear and slightly toxic to citrus. On cellular level, ACT-toxins affect plasma membrane of susceptible cells and cause a sudden increase in loss of K(+) after a few minutes of toxin treatment. The acyl-CoA ligase ACTT1, the hydrolase ACTT2, the enoyl-CoA hydratases ACTT3 and ACTT6, and the acyl-CoA synthetase ACTT5 are all involved in the biosynthesis of the AK-, AF- and ACT-toxin common 9,10-epoxy-8-hydroxy-9-methyl-decatrienoic acid (EDA) structural moiety. The exact role of each enzyme, and of additional enzymes identified within the AF-toxin clusters have still to be determined. On the other hand, ACTTS1 to ACTTS4 are specific to the tangerine pathotype. The function of ACTTS3 is to elongate the polyketide chain portion of ACT-toxin that is unique to this toxin. The enoyl-reductase ACTTS2 might complement the missing enoyl-reductase (ER) domain in ACTTS3 in the synthesis of the polyketide portion of ACT-toxin. The roles of the nonribosomal peptide synthetases-related proteins ACTTS1 and ACTTS4 have also still not been elucidated. This is Enoyl-CoA hydratase ACTT3 from Alternaria alternata (Alternaria rot fungus).